The sequence spans 248 residues: 5'-nucleotidase SurE (248 aa).

A divalent metal cation contacts are provided by Asp-8, Asp-9, Ser-39, and Asn-91.

It belongs to the SurE nucleotidase family. The cofactor is a divalent metal cation.

The protein resides in the cytoplasm. The catalysed reaction is a ribonucleoside 5'-phosphate + H2O = a ribonucleoside + phosphate. Its function is as follows. Nucleotidase that shows phosphatase activity on nucleoside 5'-monophosphates. This is 5'-nucleotidase SurE from Geotalea daltonii (strain DSM 22248 / JCM 15807 / FRC-32) (Geobacter daltonii).